Reading from the N-terminus, the 353-residue chain is Glucose import ATP-binding protein GlcV (353 aa).

An ABC transporter domain is found at 4–241 (IIVKNVSKVF…PVSIQVASLI (238 aa)). ATP-binding positions include 40 to 46 (SGAGKTT), glutamine 89, and glutamate 166.

The protein belongs to the ABC transporter superfamily. As to quaternary structure, the complex is composed of two ATP-binding proteins (GlcV), two transmembrane proteins (GlcT and GlcU) and a solute-binding protein (GlcS). Forms transient head-to-tail homodimers in the presence of ATP-Mg(2+).

The protein resides in the cell membrane. It carries out the reaction D-glucose(out) + ATP + H2O = D-glucose(in) + ADP + phosphate + H(+). Part of the ABC transporter complex GlcSTUV involved in glucose uptake. Responsible for energy coupling to the transport system. In vitro, as a free subunit, exhibits a constitutive ATPase activity. The chain is Glucose import ATP-binding protein GlcV from Saccharolobus solfataricus (strain ATCC 35092 / DSM 1617 / JCM 11322 / P2) (Sulfolobus solfataricus).